The chain runs to 330 residues: NmrA-like family domain-containing oxidoreductase notO (330 aa).

Residues 12–17 (VGIGSL), 38–42 (HHFAQ), 59–60 (RS), 80–82 (IEA), and 160–163 (LGGG) contribute to the NADP(+) site. The helical transmembrane segment at 12 to 32 (VGIGSLPAGLVALFMGATSGI) threads the bilayer. An interaction with ASS1 region spans residues 158 to 202 (SVLGGGLESPLNEQDLDLRDPKNWTFWSSSMHSGTMGTLTLERIA). 2 N-linked (GlcNAc...) asparagine glycosylation sites follow: asparagine 180 and asparagine 207.

This sequence belongs to the NmrA-type oxidoreductase family.

The protein localises to the membrane. Its function is as follows. NmrA-like family domain-containing oxidoreductase; part of the gene cluster that mediates the biosynthesis of notoamide, a fungal indole alkaloid that belongs to a family of natural products containing a characteristic bicyclo[2.2.2]diazaoctane core. The first step of notoamide biosynthesis involves coupling of L-proline and L-tryptophan by the bimodular NRPS notE, to produce cyclo-L-tryptophan-L-proline called brevianamide F. The reverse prenyltransferase notF then acts as a deoxybrevianamide E synthase and converts brevianamide F to deoxybrevianamide E via reverse prenylation at C-2 of the indole ring leading to the bicyclo[2.2.2]diazaoctane core. Deoxybrevianamide E is further hydroxylated at C-6 of the indole ring, likely catalyzed by the cytochrome P450 monooxygenase notG, to yield 6-hydroxy-deoxybrevianamide E. 6-hydroxy-deoxybrevianamide E is a specific substrate of the prenyltransferase notC for normal prenylation at C-7 to produce 6-hydroxy-7-prenyl-deoxybrevianamide, also called notoamide S. As the proposed pivotal branching point in notoamide biosynthesis, notoamide S can be diverted to notoamide E through an oxidative pyran ring closure putatively catalyzed by either notH cytochrome P450 monooxygenase or the notD FAD-linked oxidoreductase. This step would be followed by an indole 2,3-epoxidation-initiated pinacol-like rearrangement catalyzed by the notB FAD-dependent monooxygenase leading to the formation of notoamide C and notoamide D. On the other hand notoamide S is converted to notoamide T by notH (or notD), a bifunctional oxidase that also functions as the intramolecular Diels-Alderase responsible for generation of (+)-notoamide T. To generate antipodal (-)-notoaminide T, notH' (or notD') in Aspergillus versicolor is expected to catalyze a Diels-Alder reaction leading to the opposite stereochemistry. The remaining oxidoreductase notD (or notH) likely catalyzes the oxidative pyran ring formation to yield (+)-stephacidin A. The FAD-dependent monooxygenase notI is highly similar to notB and is predicted to catalyze a similar conversion from (+)-stephacidin A to (-)-notoamide B via the 2,3-epoxidation of (+)-stephacidin A followed by a pinacol-type rearrangement. Finally, it remains unclear which enzyme could be responsible for the final hydroxylation steps leading to notoamide A and sclerotiamide. The function of notO in the notoamide biosynthesis has not been determined yet. This is NmrA-like family domain-containing oxidoreductase notO from Aspergillus sp. (strain MF297-2).